The primary structure comprises 220 residues: Chaperone protein TorD (220 aa).

Belongs to the TorD/DmsD family. TorD subfamily.

It localises to the cytoplasm. Functionally, involved in the biogenesis of TorA. Acts on TorA before the insertion of the molybdenum cofactor and, as a result, probably favors a conformation of the apoenzyme that is competent for acquiring the cofactor. This chain is Chaperone protein TorD, found in Vibrio cholerae serotype O1 (strain ATCC 39541 / Classical Ogawa 395 / O395).